Here is a 549-residue protein sequence, read N- to C-terminus: Formate--tetrahydrofolate ligase (549 aa).

An ATP-binding site is contributed by Thr-60 to Thr-67.

It belongs to the formate--tetrahydrofolate ligase family.

The enzyme catalyses (6S)-5,6,7,8-tetrahydrofolate + formate + ATP = (6R)-10-formyltetrahydrofolate + ADP + phosphate. The protein operates within one-carbon metabolism; tetrahydrofolate interconversion. This is Formate--tetrahydrofolate ligase from Campylobacter concisus (strain 13826).